Reading from the N-terminus, the 328-residue chain is MLSQVRVAVTQAEPVWLDLEATVKKTCDLIAEAAANGAQLVTFPECWIPGYPAWIWARPVDMRLSSIYIQNSLKIDSPQMASIQQCAAENKIVVVLGFSENLHNSLYISQAIIASDGKILTTRKKIKPTHMERTIFGDSFGDCLQSVVDTSAGRVGALSCWEHIQPLLKYHTYAQREQIHVAAWPPLFPHSEDGSLFSMSTEGTSSIARTYAIESQSFVLHTTTVIGQSGIDRMATSTGALMSTPGGGCSAIFGPDGRQLSQPIPSAEEGIIYADLDFEHIYHSKAFVDVCGHYSRPDLLWLGVEGGVKRHVRDNATTATPQVEQQEE.

Residues 5 to 278 enclose the CN hydrolase domain; that stretch reads VRVAVTQAEP…EGIIYADLDF (274 aa). The active-site Proton acceptor is Glu-45. Lys-125 is an active-site residue. The active-site Nucleophile is Cys-160.

The protein belongs to the carbon-nitrogen hydrolase superfamily. Nitrilase family.

It catalyses the reaction a nitrile + 2 H2O = a carboxylate + NH4(+). The catalysed reaction is 4-chlorophenylacetonitrile + 2 H2O = 4-chlorophenylacetate + NH4(+). Functionally, nitrilase that hydrolyzes preferentially phenylacetonitrile, (R,S)-mandelonitrile, and 3-indolylacetonitrile. In Aspergillus niger (strain ATCC MYA-4892 / CBS 513.88 / FGSC A1513), this protein is Arylacetonitrilase.